A 218-amino-acid chain; its full sequence is Thiamine-phosphate synthase (218 aa).

Residues 46–50 (QFRDK) and Asp-83 contribute to the 4-amino-2-methyl-5-(diphosphooxymethyl)pyrimidine site. Residues Asp-84 and Asp-103 each contribute to the Mg(2+) site. 4-amino-2-methyl-5-(diphosphooxymethyl)pyrimidine is bound at residue Ser-122. A 2-[(2R,5Z)-2-carboxy-4-methylthiazol-5(2H)-ylidene]ethyl phosphate-binding site is contributed by 149–151 (TNS). Position 152 (Lys-152) interacts with 4-amino-2-methyl-5-(diphosphooxymethyl)pyrimidine. Residues Gly-181 and 201-202 (IT) contribute to the 2-[(2R,5Z)-2-carboxy-4-methylthiazol-5(2H)-ylidene]ethyl phosphate site.

Belongs to the thiamine-phosphate synthase family. Requires Mg(2+) as cofactor.

It catalyses the reaction 2-[(2R,5Z)-2-carboxy-4-methylthiazol-5(2H)-ylidene]ethyl phosphate + 4-amino-2-methyl-5-(diphosphooxymethyl)pyrimidine + 2 H(+) = thiamine phosphate + CO2 + diphosphate. The catalysed reaction is 2-(2-carboxy-4-methylthiazol-5-yl)ethyl phosphate + 4-amino-2-methyl-5-(diphosphooxymethyl)pyrimidine + 2 H(+) = thiamine phosphate + CO2 + diphosphate. The enzyme catalyses 4-methyl-5-(2-phosphooxyethyl)-thiazole + 4-amino-2-methyl-5-(diphosphooxymethyl)pyrimidine + H(+) = thiamine phosphate + diphosphate. It functions in the pathway cofactor biosynthesis; thiamine diphosphate biosynthesis; thiamine phosphate from 4-amino-2-methyl-5-diphosphomethylpyrimidine and 4-methyl-5-(2-phosphoethyl)-thiazole: step 1/1. Its function is as follows. Condenses 4-methyl-5-(beta-hydroxyethyl)thiazole monophosphate (THZ-P) and 2-methyl-4-amino-5-hydroxymethyl pyrimidine pyrophosphate (HMP-PP) to form thiamine monophosphate (TMP). This is Thiamine-phosphate synthase from Actinobacillus pleuropneumoniae serotype 7 (strain AP76).